The following is a 169-amino-acid chain: Glycine-rich RNA-binding protein 10 (169 aa).

An RRM domain is found at 6-84; the sequence is YRCFVGGLAW…RTITVNEAQS (79 aa). Disordered stretches follow at residues 80–101 and 121–169; these read NEAQ…YGGR and GYGS…GGGW. Residues 85–101 show a composition bias toward gly residues; the sequence is RGGGGGGGRGGGGYGGR.

In terms of tissue distribution, expressed only in roots and stems.

In terms of biological role, possibly has a role in RNA transcription or processing during stress. The polypeptide is Glycine-rich RNA-binding protein 10 (GRP10) (Brassica napus (Rape)).